A 147-amino-acid chain; its full sequence is Endoribonuclease YbeY (147 aa).

The Zn(2+) site is built by H109, H113, and H119.

This sequence belongs to the endoribonuclease YbeY family. Requires Zn(2+) as cofactor.

It is found in the cytoplasm. Single strand-specific metallo-endoribonuclease involved in late-stage 70S ribosome quality control and in maturation of the 3' terminus of the 16S rRNA. This is Endoribonuclease YbeY from Thiobacillus denitrificans (strain ATCC 25259 / T1).